The primary structure comprises 577 residues: Pentatricopeptide repeat-containing protein At1g63400 (577 aa).

PPR repeat units lie at residues 49–83, 84–118, 119–153, 154–188, 189–223, 224–258, 259–293, 294–328, 329–363, 364–398, 399–433, 434–468, 469–503, 504–538, and 539–573; these read GSGD…RPLP, SIFE…GISH, NLYT…GYEP, SIVT…GYRP, DTIT…GCQP, NLVT…KIEA, NVVI…GVRP, NVIT…KINP, NVVT…SIDP, DIFT…DCFP, NVVT…GLVG, NTVT…GVHP, NIMT…KMEP, TIYT…GVKP, and DVII…GPLP.

It belongs to the PPR family. P subfamily.

In Arabidopsis thaliana (Mouse-ear cress), this protein is Pentatricopeptide repeat-containing protein At1g63400.